We begin with the raw amino-acid sequence, 291 residues long: Exosome complex exonuclease RRP42 (291 aa).

N-acetylalanine is present on Ala2. Position 116 is an N6-acetyllysine (Lys116).

The protein belongs to the RNase PH family. Component of the RNA exosome core complex (Exo-9), composed of EXOSC1, EXOSC2, EXOSC3, EXOSC4, EXOSC5, EXOSC6, EXOSC7, EXOSC8 and EXOSC9; within the complex interacts with EXOSC2 and EXOSC4. The catalytically inactive RNA exosome core complex (Exo-9) associates with the catalytic subunit EXOSC10/RRP6. Exo-9 may associate with DIS3 to form the nucleolar exosome complex, or DIS3L to form the cytoplasmic exosome complex. Exo-9 is formed by a hexameric base ring consisting of the heterodimers EXOSC4-EXOSC9, EXOSC5-EXOSC8 and EXOSC6-EXOSC7, and a cap ring consisting of EXOSC1, EXOSC2 and EXOSC3. The RNA exosome complex associates with cofactors C1D/RRP47, MPHOSPH6/MPP6 and MTREX/MTR4. Interacts with ZC3HAV1. Interacts with DIS3; the interaction is direct.

Its subcellular location is the nucleus. The protein localises to the nucleolus. It is found in the cytoplasm. Functionally, non-catalytic component of the RNA exosome complex which has 3'-&gt;5' exoribonuclease activity and participates in a multitude of cellular RNA processing and degradation events. In the nucleus, the RNA exosome complex is involved in proper maturation of stable RNA species such as rRNA, snRNA and snoRNA, in the elimination of RNA processing by-products and non-coding 'pervasive' transcripts, such as antisense RNA species and promoter-upstream transcripts (PROMPTs), and of mRNAs with processing defects, thereby limiting or excluding their export to the cytoplasm. The RNA exosome may be involved in Ig class switch recombination (CSR) and/or Ig variable region somatic hypermutation (SHM) by targeting AICDA deamination activity to transcribed dsDNA substrates. In the cytoplasm, the RNA exosome complex is involved in general mRNA turnover and specifically degrades inherently unstable mRNAs containing AU-rich elements (AREs) within their 3' untranslated regions, and in RNA surveillance pathways, preventing translation of aberrant mRNAs. It seems to be involved in degradation of histone mRNA. The catalytic inactive RNA exosome core complex of 9 subunits (Exo-9) is proposed to play a pivotal role in the binding and presentation of RNA for ribonucleolysis, and to serve as a scaffold for the association with catalytic subunits and accessory proteins or complexes. In Mus musculus (Mouse), this protein is Exosome complex exonuclease RRP42 (Exosc7).